The sequence spans 237 residues: Uridylate kinase (237 aa).

Residue 11-14 participates in ATP binding; sequence KLSG. Residue Gly-53 participates in UMP binding. Residues Gly-54 and Arg-58 each contribute to the ATP site. UMP-binding positions include Asp-73 and 134-141; that span reads TGNPFFTT. ATP-binding residues include Thr-161, Tyr-167, and Asp-170.

The protein belongs to the UMP kinase family. Homohexamer.

Its subcellular location is the cytoplasm. The catalysed reaction is UMP + ATP = UDP + ADP. The protein operates within pyrimidine metabolism; CTP biosynthesis via de novo pathway; UDP from UMP (UMPK route): step 1/1. Its activity is regulated as follows. Inhibited by UTP. Catalyzes the reversible phosphorylation of UMP to UDP. In Burkholderia cenocepacia (strain HI2424), this protein is Uridylate kinase.